A 106-amino-acid chain; its full sequence is uncharacterized protein (106 aa).

Helical transmembrane passes span 4-24 (LPVVIISIVLFFVLFFGIGFL), 27-47 (MLLRMSWIMAVIYPIVCLFII), and 78-98 (VLILVSGLAGAIVSGIAINML).

It is found in the cell membrane. This is an uncharacterized protein from Bacillus subtilis (strain 168).